Reading from the N-terminus, the 481-residue chain is Aspartyl/glutamyl-tRNA(Asn/Gln) amidotransferase subunit B (481 aa).

It belongs to the GatB/GatE family. GatB subfamily. In terms of assembly, heterotrimer of A, B and C subunits.

The catalysed reaction is L-glutamyl-tRNA(Gln) + L-glutamine + ATP + H2O = L-glutaminyl-tRNA(Gln) + L-glutamate + ADP + phosphate + H(+). It catalyses the reaction L-aspartyl-tRNA(Asn) + L-glutamine + ATP + H2O = L-asparaginyl-tRNA(Asn) + L-glutamate + ADP + phosphate + 2 H(+). Its function is as follows. Allows the formation of correctly charged Asn-tRNA(Asn) or Gln-tRNA(Gln) through the transamidation of misacylated Asp-tRNA(Asn) or Glu-tRNA(Gln) in organisms which lack either or both of asparaginyl-tRNA or glutaminyl-tRNA synthetases. The reaction takes place in the presence of glutamine and ATP through an activated phospho-Asp-tRNA(Asn) or phospho-Glu-tRNA(Gln). The chain is Aspartyl/glutamyl-tRNA(Asn/Gln) amidotransferase subunit B from Cellvibrio japonicus (strain Ueda107) (Pseudomonas fluorescens subsp. cellulosa).